The primary structure comprises 330 residues: MPPRLLLTSGEPAGIGPDLCVLLSRRPFPCGITVLGDPDLLESRARLLGVPIELRRVVSGDVVPPHEPGVLHVLPTRRQPGTAPGKLDPANAAYVLETIADGARACLAGHYDALVTAPVQKSVINEAGIAFTGHTEFIAGITGGSPVMMLAAEGFRVALATTHLPLAEVSRAITVERLTGVLGVLHEDLVRRFGFSRPRILVCGLNPHAGEGGHLGGEEITVIEPVLARLRQDGMDLTGPLPADTLFLPHNLDRADAVLAMYHDQGLPVLKYAGFSRAVNITLGLPIIRTSVDHGTALDRAGTGQIDTGSLEEAVRVAMEMATGRPAESP.

Substrate-binding residues include His134 and Thr135. The a divalent metal cation site is built by His163, His208, and His263. Positions 271, 280, and 289 each coordinate substrate.

The protein belongs to the PdxA family. As to quaternary structure, homodimer. Zn(2+) serves as cofactor. Mg(2+) is required as a cofactor. The cofactor is Co(2+).

It is found in the cytoplasm. The catalysed reaction is 4-(phosphooxy)-L-threonine + NAD(+) = 3-amino-2-oxopropyl phosphate + CO2 + NADH. The protein operates within cofactor biosynthesis; pyridoxine 5'-phosphate biosynthesis; pyridoxine 5'-phosphate from D-erythrose 4-phosphate: step 4/5. Functionally, catalyzes the NAD(P)-dependent oxidation of 4-(phosphooxy)-L-threonine (HTP) into 2-amino-3-oxo-4-(phosphooxy)butyric acid which spontaneously decarboxylates to form 3-amino-2-oxopropyl phosphate (AHAP). The protein is 4-hydroxythreonine-4-phosphate dehydrogenase of Methylococcus capsulatus (strain ATCC 33009 / NCIMB 11132 / Bath).